The primary structure comprises 246 residues: MNNNTTAPTYTLRGLQLIGWRDMQHALDYLFADGQLKQGTLVAINAEKMLTIEDNAEVRELINAAEFKYADGISVVRSVRKKYPQAQVSRVAGADLWEELMARAGKEGTPVFLVGGKPEVLAQTETKLRNQWNVNIVGSQDGYFKPEQRQALFERIHASGAQIVTVAMGSPKQEIFMRDCRLVHPDALYMGVGGTYDVFTGHVKRAPKIWQTLGLEWLYRLLSQPSRIKRQLRLLRYLRWHYTGNL.

This sequence belongs to the glycosyltransferase 26 family.

It carries out the reaction UDP-N-acetyl-alpha-D-mannosaminouronate + N-acetyl-alpha-D-glucosaminyl-di-trans,octa-cis-undecaprenyl diphosphate = beta-D-ManNAcA-(1-&gt;4)-alpha-D-GlcNAc-di-trans,octa-cis-undecaprenyl diphosphate + UDP + H(+). The protein operates within bacterial outer membrane biogenesis; enterobacterial common antigen biosynthesis. In terms of biological role, catalyzes the synthesis of Und-PP-GlcNAc-ManNAcA (Lipid II), the second lipid-linked intermediate involved in enterobacterial common antigen (ECA) synthesis. This Escherichia coli O7:K1 (strain IAI39 / ExPEC) protein is UDP-N-acetyl-D-mannosaminuronic acid transferase.